The chain runs to 105 residues: Replication restart protein PriB (105 aa).

Residues 1–102 (MTANRLTLSG…LHAEQIELID (102 aa)) form the SSB domain.

This sequence belongs to the PriB family. As to quaternary structure, homodimer. Interacts with PriA and DnaT. Component of the replication restart primosome. Primosome assembly occurs via a 'hand-off' mechanism. PriA binds to replication forks, subsequently PriB then DnaT bind; DnaT then displaces ssDNA to generate the helicase loading substrate.

In terms of biological role, involved in the restart of stalled replication forks, which reloads the replicative helicase on sites other than the origin of replication; the PriA-PriB pathway is the major replication restart pathway. During primosome assembly it facilitates complex formation between PriA and DnaT on DNA; stabilizes PriA on DNA. Stimulates the DNA unwinding activity of PriA helicase. The protein is Replication restart protein PriB of Serratia proteamaculans (strain 568).